Here is a 179-residue protein sequence, read N- to C-terminus: Large ribosomal subunit protein uL10 (179 aa).

This sequence belongs to the universal ribosomal protein uL10 family. In terms of assembly, part of the ribosomal stalk of the 50S ribosomal subunit. The N-terminus interacts with L11 and the large rRNA to form the base of the stalk. The C-terminus forms an elongated spine to which L12 dimers bind in a sequential fashion forming a multimeric L10(L12)X complex.

Functionally, forms part of the ribosomal stalk, playing a central role in the interaction of the ribosome with GTP-bound translation factors. This Mycolicibacterium gilvum (strain PYR-GCK) (Mycobacterium gilvum (strain PYR-GCK)) protein is Large ribosomal subunit protein uL10.